The chain runs to 148 residues: Large ribosomal subunit protein bL27m (148 aa).

Residues 1–30 constitute a mitochondrion transit peptide; the sequence is MALAVLAWRTRTAVIALLSPPQAAALAVRY.

The protein belongs to the bacterial ribosomal protein bL27 family. Component of the mitochondrial ribosome large subunit (39S) which comprises a 16S rRNA and about 50 distinct proteins.

The protein localises to the mitochondrion. In Bos taurus (Bovine), this protein is Large ribosomal subunit protein bL27m (MRPL27).